Here is a 1134-residue protein sequence, read N- to C-terminus: MMS19 nucleotide excision repair protein homolog (1134 aa).

HEAT repeat units follow at residues Q959–V998, L1002–Q1047, S1050–R1089, and Y1092–G1130.

Belongs to the MET18/MMS19 family. In terms of assembly, part of a complex composed of AE7, CIA1, MMS19 and NAR1. Interacts with AE7.

It is found in the nucleus. Its subcellular location is the cytoplasm. Functionally, may select specific target apoproteins to which a Fe-S cluster produced by the cytosolic iron-sulfur (Fe-S) protein assembly (CIA) pathway is transferred. The chain is MMS19 nucleotide excision repair protein homolog from Arabidopsis thaliana (Mouse-ear cress).